The sequence spans 184 residues: MVNSFIKTTEEKMKKSVEKIAEELKHLRTGRATPAVLEEIKIDYYGVPTPVLQVAQVTTEERQLVIKPWERNLLNVIEKAILASDLGLTPVNDGTVVRINFPTPTTEQRQKWVKKAKEIVEEGKVAVRNIRRDILKDIKDKKKAGEISEDDEKRLEKEIQNLTDKYVAELDKLFEKKEKEIMEF.

It belongs to the RRF family.

It is found in the cytoplasm. Its function is as follows. Responsible for the release of ribosomes from messenger RNA at the termination of protein biosynthesis. May increase the efficiency of translation by recycling ribosomes from one round of translation to another. This Fervidobacterium nodosum (strain ATCC 35602 / DSM 5306 / Rt17-B1) protein is Ribosome-recycling factor.